The following is a 201-amino-acid chain: UPF0323 lipoprotein Cj0371 (201 aa).

Residues 1–26 (MKKIKKIIQIGMIGGLAAVAGGALAG) form the signal peptide. Residue C27 is the site of N-palmitoyl cysteine attachment. C27 carries S-diacylglycerol cysteine lipidation. A disordered region spans residues 169–201 (NKAGTTSSASSAKKSGFFGGGSKATSSSSSFGS). Low complexity-rich tracts occupy residues 170–184 (KAGT…KKSG) and 191–201 (KATSSSSSFGS).

Belongs to the UPF0323 family.

The protein localises to the cell membrane. The chain is UPF0323 lipoprotein Cj0371 from Campylobacter jejuni subsp. jejuni serotype O:2 (strain ATCC 700819 / NCTC 11168).